The sequence spans 67 residues: DNA-directed RNA polymerase subunit omega (67 aa).

This sequence belongs to the RNA polymerase subunit omega family. As to quaternary structure, the RNAP catalytic core consists of 2 alpha, 1 beta, 1 beta' and 1 omega subunit. When a sigma factor is associated with the core the holoenzyme is formed, which can initiate transcription.

The enzyme catalyses RNA(n) + a ribonucleoside 5'-triphosphate = RNA(n+1) + diphosphate. Functionally, promotes RNA polymerase assembly. Latches the N- and C-terminal regions of the beta' subunit thereby facilitating its interaction with the beta and alpha subunits. The chain is DNA-directed RNA polymerase subunit omega from Listeria monocytogenes serotype 4b (strain F2365).